The sequence spans 311 residues: Methionyl-tRNA formyltransferase (311 aa).

Position 110–113 (S110–P113) interacts with (6S)-5,6,7,8-tetrahydrofolate.

It belongs to the Fmt family.

It catalyses the reaction L-methionyl-tRNA(fMet) + (6R)-10-formyltetrahydrofolate = N-formyl-L-methionyl-tRNA(fMet) + (6S)-5,6,7,8-tetrahydrofolate + H(+). Attaches a formyl group to the free amino group of methionyl-tRNA(fMet). The formyl group appears to play a dual role in the initiator identity of N-formylmethionyl-tRNA by promoting its recognition by IF2 and preventing the misappropriation of this tRNA by the elongation apparatus. This chain is Methionyl-tRNA formyltransferase, found in Streptococcus pyogenes serotype M3 (strain ATCC BAA-595 / MGAS315).